A 447-amino-acid polypeptide reads, in one-letter code: MLTGVIEGFYGRDWRRDERATVMDWIAAAGMNTYIYGPKDDVHVRARWRVPYDAAGLARLTELRDAAAARGMVFYVSLAPCLDVTYSDPQDRAALLARVDQLARAGLRNLVLLFDDIPSVLPEADRHRFDSFAEAQADLSNMVLRHLRGAGHVVFCPTEYCGRMAGGDPRGSAYLQRLGSTLDPAIDIFWTGPEIVSEEIVAAHLAAVGEVLRRRPVIWDNFHANDYDIRRVFAGPLGGRSRDILPLVAGWITNPNNEAEANFPAIHTTGAYLADPDYAPERAIAAAVAAWQPRFRLAFGDGAVPSDLVALLCDLFWQPFALGPETTRILSALRAALTVPRPDPSDPAWRAALEDLRDLKRRINKLFTLMTEIENRDLFHTFHNYLWEAQEEVGHLVAYCDWLDEAPPPGAVFPATDRIHNFYRRGFGVAVQDILQRDRQGRYHHGV.

The GH84 domain maps to 1 to 277 (MLTGVIEGFY…TTGAYLADPD (277 aa)). The a protein site is built by Gly8, Lys39, and Asp115. Asp116 (proton donor) is an active-site residue. Residues Tyr160, 219–221 (WDN), Asp226, and Asn254 contribute to the a protein site.

The protein belongs to the glycosyl hydrolase 84 family.

It catalyses the reaction 3-O-(N-acetyl-beta-D-glucosaminyl)-L-seryl-[protein] + H2O = N-acetyl-D-glucosamine + L-seryl-[protein]. The catalysed reaction is 3-O-(N-acetyl-beta-D-glucosaminyl)-L-threonyl-[protein] + H2O = L-threonyl-[protein] + N-acetyl-D-glucosamine. Inhibited by PUGNac (O-(2-acetamido-2-deoxy-D-glucopyranosylidene)amino-N-phenylcarbamate). Its function is as follows. Cleaves GlcNAc from O-glycosylated proteins. Can use p-nitrophenyl-beta-GlcNAc and 4-methylumbelliferone-GlcNAc as substrate (in vitro). The protein is Protein O-GlcNAcase of Oceanicola granulosus (strain ATCC BAA-861 / DSM 15982 / KCTC 12143 / HTCC2516).